The sequence spans 171 residues: S-ribosylhomocysteine lyase (171 aa).

3 residues coordinate Fe cation: H54, H58, and C128.

This sequence belongs to the LuxS family. As to quaternary structure, homodimer. Requires Fe cation as cofactor.

It catalyses the reaction S-(5-deoxy-D-ribos-5-yl)-L-homocysteine = (S)-4,5-dihydroxypentane-2,3-dione + L-homocysteine. Functionally, involved in the synthesis of autoinducer 2 (AI-2) which is secreted by bacteria and is used to communicate both the cell density and the metabolic potential of the environment. The regulation of gene expression in response to changes in cell density is called quorum sensing. Catalyzes the transformation of S-ribosylhomocysteine (RHC) to homocysteine (HC) and 4,5-dihydroxy-2,3-pentadione (DPD). This Pectobacterium carotovorum subsp. carotovorum (strain PC1) protein is S-ribosylhomocysteine lyase.